The chain runs to 209 residues: Uracil phosphoribosyltransferase (209 aa).

5-phospho-alpha-D-ribose 1-diphosphate contacts are provided by residues arginine 79, arginine 104, and 131–139 (DPMLATGAS). Uracil-binding positions include isoleucine 194 and 199–201 (GDA). Aspartate 200 provides a ligand contact to 5-phospho-alpha-D-ribose 1-diphosphate.

This sequence belongs to the UPRTase family. Mg(2+) is required as a cofactor.

The catalysed reaction is UMP + diphosphate = 5-phospho-alpha-D-ribose 1-diphosphate + uracil. It participates in pyrimidine metabolism; UMP biosynthesis via salvage pathway; UMP from uracil: step 1/1. With respect to regulation, allosterically activated by GTP. In terms of biological role, catalyzes the conversion of uracil and 5-phospho-alpha-D-ribose 1-diphosphate (PRPP) to UMP and diphosphate. This chain is Uracil phosphoribosyltransferase, found in Staphylococcus carnosus (strain TM300).